The following is a 562-amino-acid chain: Probable sesquiterpene synthase (562 aa).

The Mg(2+) site is built by aspartate 315, aspartate 319, and glutamate 467. The DDXXD motif signature appears at aspartate 315–aspartate 319.

Belongs to the terpene synthase family. Tpsa subfamily. Mg(2+) is required as a cofactor. Mn(2+) serves as cofactor.

Functionally, sesquiterpene synthase. The polypeptide is Probable sesquiterpene synthase (SesquiTPS) (Santalum spicatum (Australian sandalwood)).